The primary structure comprises 375 residues: Succinyl-diaminopimelate desuccinylase (375 aa).

Residue His66 participates in Zn(2+) binding. Residue Asp68 is part of the active site. Asp99 serves as a coordination point for Zn(2+). Residue Glu133 is the Proton acceptor of the active site. 3 residues coordinate Zn(2+): Glu134, Glu162, and His348.

It belongs to the peptidase M20A family. DapE subfamily. In terms of assembly, homodimer. The cofactor is Zn(2+). Co(2+) serves as cofactor.

The enzyme catalyses N-succinyl-(2S,6S)-2,6-diaminopimelate + H2O = (2S,6S)-2,6-diaminopimelate + succinate. It participates in amino-acid biosynthesis; L-lysine biosynthesis via DAP pathway; LL-2,6-diaminopimelate from (S)-tetrahydrodipicolinate (succinylase route): step 3/3. In terms of biological role, catalyzes the hydrolysis of N-succinyl-L,L-diaminopimelic acid (SDAP), forming succinate and LL-2,6-diaminopimelate (DAP), an intermediate involved in the bacterial biosynthesis of lysine and meso-diaminopimelic acid, an essential component of bacterial cell walls. This is Succinyl-diaminopimelate desuccinylase from Salmonella agona (strain SL483).